The chain runs to 217 residues: Probable transaldolase (217 aa).

The active-site Schiff-base intermediate with substrate is the Lys83.

It belongs to the transaldolase family. Type 3B subfamily.

It localises to the cytoplasm. The catalysed reaction is D-sedoheptulose 7-phosphate + D-glyceraldehyde 3-phosphate = D-erythrose 4-phosphate + beta-D-fructose 6-phosphate. It participates in carbohydrate degradation; pentose phosphate pathway; D-glyceraldehyde 3-phosphate and beta-D-fructose 6-phosphate from D-ribose 5-phosphate and D-xylulose 5-phosphate (non-oxidative stage): step 2/3. Its function is as follows. Transaldolase is important for the balance of metabolites in the pentose-phosphate pathway. In Caulobacter sp. (strain K31), this protein is Probable transaldolase.